Consider the following 311-residue polypeptide: tRNA dimethylallyltransferase (311 aa).

13–20 (GPTASGKT) is a binding site for ATP. 15 to 20 (TASGKT) provides a ligand contact to substrate. 2 interaction with substrate tRNA regions span residues 38–41 (DSMQ) and 166–170 (QRVLR).

The protein belongs to the IPP transferase family. As to quaternary structure, monomer. Requires Mg(2+) as cofactor.

It catalyses the reaction adenosine(37) in tRNA + dimethylallyl diphosphate = N(6)-dimethylallyladenosine(37) in tRNA + diphosphate. Its function is as follows. Catalyzes the transfer of a dimethylallyl group onto the adenine at position 37 in tRNAs that read codons beginning with uridine, leading to the formation of N6-(dimethylallyl)adenosine (i(6)A). In Staphylococcus aureus (strain MRSA252), this protein is tRNA dimethylallyltransferase.